Reading from the N-terminus, the 65-residue chain is Period circadian protein (65 aa).

The segment at 1–65 is disordered; the sequence is EGSGGSGSSG…VTLTESLLNK (65 aa). Residues 18-28 show a composition bias toward polar residues; that stretch reads VRMSSVTNTSN. A compositionally biased stretch (low complexity) spans 29-38; sequence AGTGTSAGDN. A compositionally biased stretch (polar residues) spans 56 to 65; it reads VTLTESLLNK.

Forms a heterodimer with timeless (TIM); the complex then translocates into the nucleus. Post-translationally, phosphorylated with a circadian rhythmicity, probably by the double-time protein (dbt). Phosphorylation could be implicated in the stability of per monomer and in the formation of heterodimer per-tim.

It is found in the nucleus. The protein resides in the cytoplasm. Its subcellular location is the perinuclear region. Functionally, essential for biological clock functions. Determines the period length of circadian and ultradian rhythms; an increase in PER dosage leads to shortened circadian rhythms and a decrease leads to lengthened circadian rhythms. Essential for the circadian rhythmicity of locomotor activity, eclosion behavior, and for the rhythmic component of the male courtship song that originates in the thoracic nervous system. The biological cycle depends on the rhythmic formation and nuclear localization of the TIM-PER complex. Light induces the degradation of TIM, which promotes elimination of PER. Nuclear activity of the heterodimer coordinatively regulates PER and TIM transcription through a negative feedback loop. Behaves as a negative element in circadian transcriptional loop. Does not appear to bind DNA, suggesting indirect transcriptional inhibition. In Drosophila mojavensis (Fruit fly), this protein is Period circadian protein (per).